A 103-amino-acid polypeptide reads, in one-letter code: MKKESLIFVSLFTAVISCCILFVSFAGKIEERKQYVKIEVQEGDTLWELADRIKGGKTADKHKFIEWVADKNNLPTSVIKPGDVLILPVAKQHSDQYQLAVVE.

Positions 36–87 (VKIEVQEGDTLWELADRIKGGKTADKHKFIEWVADKNNLPTSVIKPGDVLIL) constitute a LysM domain.

This sequence belongs to the YneA family.

The protein resides in the cytoplasm. Functionally, inhibits cell division during the SOS response. Affects a later stage of the cell division protein assembly, after the assembly of the Z ring, by probably suppressing recruitment of FtsL and/or DivIC to the division machinery. This chain is Cell division suppressor protein YneA, found in Bacillus licheniformis (strain ATCC 14580 / DSM 13 / JCM 2505 / CCUG 7422 / NBRC 12200 / NCIMB 9375 / NCTC 10341 / NRRL NRS-1264 / Gibson 46).